The primary structure comprises 176 residues: 3-hydroxyanthranilate 3,4-dioxygenase (176 aa).

Arginine 44 lines the O2 pocket. Residues histidine 48, glutamate 54, and histidine 92 each coordinate Fe cation. Glutamate 54 serves as a coordination point for substrate. Substrate is bound by residues arginine 96 and glutamate 106. Positions 121, 124, 158, and 161 each coordinate Fe cation.

It belongs to the 3-HAO family. In terms of assembly, homodimer. The cofactor is Fe(2+).

The catalysed reaction is 3-hydroxyanthranilate + O2 = (2Z,4Z)-2-amino-3-carboxymuconate 6-semialdehyde. The protein operates within cofactor biosynthesis; NAD(+) biosynthesis; quinolinate from L-kynurenine: step 3/3. Catalyzes the oxidative ring opening of 3-hydroxyanthranilate to 2-amino-3-carboxymuconate semialdehyde, which spontaneously cyclizes to quinolinate. This Xanthomonas oryzae pv. oryzae (strain MAFF 311018) protein is 3-hydroxyanthranilate 3,4-dioxygenase.